The sequence spans 1873 residues: Voltage-dependent L-type calcium channel subunit alpha-1S (1873 aa).

The tract at residues 1–23 (MEPSSPQDEGLRKKQPKKPLPEV) is disordered. Over 1 to 51 (MEPSSPQDEGLRKKQPKKPLPEVLPRPPRALFCLTLQNPLRKACISIVEWK) the chain is Cytoplasmic. An I repeat occupies 38–337 (NPLRKACISI…LVLGVLSGEF (300 aa)). The helical transmembrane segment at 52-70 (PFETIILLTIFANCVALAV) threads the bilayer. The Extracellular portion of the chain corresponds to 71-85 (YLPMPEDDNNSLNLG). The N-linked (GlcNAc...) asparagine glycan is linked to Asn-79. Residues 86–106 (LEKLEYFFLTVFSIEAAMKII) traverse the membrane as a helical segment. Topologically, residues 107–115 (AYGFLFHQD) are cytoplasmic. A helical membrane pass occupies residues 116–136 (AYLRSGWNVLDFIIVFLGVFT). The Extracellular portion of the chain corresponds to 137–160 (AILEQVNVIQSNTAPMSSKGAGLD). A helical membrane pass occupies residues 161–179 (VKALRAFRVLRPLRLVSGV). The Cytoplasmic segment spans residues 180–196 (PSLQVVLNSIFKAMLPL). Residues 197 to 218 (FHIALLVLFMVIIYAIIGLELF) traverse the membrane as a helical segment. Residues 219-279 (KGKMHKTCYY…HGITHFDNFG (61 aa)) are Extracellular-facing. Cystine bridges form between Cys-226/Cys-254 and Cys-245/Cys-261. A glycan (N-linked (GlcNAc...) asparagine) is linked at Asn-257. Residues 280 to 301 (FSMLTVYQCITMEGWTDVLYWV) constitute an intramembrane region (pore-forming). The Selectivity filter of repeat I motif lies at 290-293 (TMEG). Glu-292 contacts Ca(2+). Residues 302 to 309 (NDAIGNEW) lie on the Extracellular side of the membrane. The chain crosses the membrane as a helical span at residues 310-330 (PWIYFVTLILLGSFFILNLVL). Over 331–432 (GVLSGEFTKE…WKCHDLVKSR (102 aa)) the chain is Cytoplasmic. The interval 357–374 (QQLEEDLRGYMSWITQGE) is binding to the beta subunit. Ser-393 and Ser-397 each carry phosphoserine. The II repeat unit spans residues 418–664 (NRVFRWKCHD…VFLAIAVDNL (247 aa)). The chain crosses the membrane as a helical span at residues 433-451 (VFYWLVILIVALNTLSIAS). Topologically, residues 452-462 (EHHNQPLWLTH) are extracellular. Residues 463-483 (LQDIANRVLLSLFTIEMLLKM) form a helical membrane-spanning segment. The Cytoplasmic segment spans residues 484 to 494 (YGLGLRQYFMS). A helical transmembrane segment spans residues 495 to 514 (IFNRFDCFVVCSGILELLLV). Topologically, residues 515–523 (ESGAMTPLG) are extracellular. A helical transmembrane segment spans residues 524–542 (ISVLRCIRLLRLFKITKYW). The Cytoplasmic portion of the chain corresponds to 543–561 (TSLSNLVASLLNSIRSIAS). A helical transmembrane segment spans residues 562–581 (LLLLLFLFIIIFALLGMQLF). Over 582–601 (GGRYDFEDTEVRRSNFDNFP) the chain is Extracellular. An intramembrane region (pore-forming) is located at residues 602 to 623 (QALISVFQVLTGEDWNSVMYNG). A Selectivity filter of repeat II motif is present at residues 612 to 615 (TGED). Glu-614 lines the Ca(2+) pocket. At 624 to 633 (IMAYGGPSYP) the chain is on the extracellular side. A helical transmembrane segment spans residues 634 to 653 (GVLVCIYFIILFVCGNYILL). Topologically, residues 654–799 (NVFLAIAVDN…VLCHRIVNAT (146 aa)) are cytoplasmic. Disordered regions lie at residues 673-717 (AQKA…IPTT) and 731-757 (EVKD…VSPR). At Ser-687 the chain carries Phosphoserine; by PKA. Basic and acidic residues predominate over residues 690–711 (LPDKTEEEKSVMAKKLEQKPKG). Residues 742–751 (PGDDEEDEPE) are compositionally biased toward acidic residues. Positions 747-760 (EDEPEIPVSPRPRP) are interaction with STAC, STAC2 and STAC3 (via SH3 domains). One copy of the III repeat lies at 786-1068 (NKVRVLCHRI…IFVGFVIVTF (283 aa)). A helical membrane pass occupies residues 800-818 (WFTNFILLFILLSSAALAA). Residues 819–830 (EDPIRAESVRNQ) are Extracellular-facing. The chain crosses the membrane as a helical span at residues 831 to 850 (ILGYFDIAFTSVFTVEIVLK). Residues 851-866 (MTTYGAFLHKGSFCRN) are Cytoplasmic-facing. The helical transmembrane segment at 867–885 (YFNILDLLVVAVSLISMGL) threads the bilayer. Residues 886–892 (ESSTISV) are Extracellular-facing. A helical membrane pass occupies residues 893 to 911 (VKILRVLRVLRPLRAINRA). The Cytoplasmic portion of the chain corresponds to 912–930 (KGLKHVVQCVFVAIRTIGN). A helical transmembrane segment spans residues 931–950 (IVLVTTLLQFMFACIGVQLF). The Extracellular portion of the chain corresponds to 951-1000 (KGKFFSCNDLSKMTEEECRGYYYVYKDGDPTQMELRPRQWIHNDFHFDNV). Cys-957 and Cys-968 are oxidised to a cystine. Positions 988–1077 (RQWIHNDFHF…FQEQGETEYK (90 aa)) are dihydropyridine binding. Residues 1001-1021 (LSAMMSLFTVSTFEGWPQLLY) constitute an intramembrane region (pore-forming). The Selectivity filter of repeat III signature appears at 1012 to 1015 (TFEG). Glu-1014 is a binding site for Ca(2+). Topologically, residues 1022–1038 (RAIDSNEEDMGPVYNNR) are extracellular. Residues 1039-1060 (VEMAIFFIIYIILIAFFMMNIF) traverse the membrane as a helical segment. The Cytoplasmic portion of the chain corresponds to 1061–1118 (VGFVIVTFQEQGETEYKNCELDKNQRQCVQYALKARPLRCYIPKNPYQYQVWYVVTSS). An IV repeat occupies 1105–1384 (NPYQYQVWYV…LFVAVIMDNF (280 aa)). Residues 1119–1140 (YFEYLMFALIMLNTICLGMQHY) form a helical membrane-spanning segment. The Extracellular segment spans residues 1141–1148 (HQSEEMNH). The chain crosses the membrane as a helical span at residues 1149 to 1170 (ISDILNVAFTIIFTLEMILKLL). At 1171–1180 (AFKARGYFGD) the chain is on the cytoplasmic side. Residues 1181 to 1200 (PWNVFDFLIVIGSIIDVILS) traverse the membrane as a helical segment. Over 1201-1231 (EIDTFLASSGGLYCLGGGCGNVDPDESARIS) the chain is Extracellular. A helical transmembrane segment spans residues 1232-1250 (SAFFRLFRVMRLIKLLSRA). At 1251-1268 (EGVRTLLWTFIKSFQALP) the chain is on the cytoplasmic side. Residues 1269 to 1289 (YVALLIVMLFFIYAVIGMQMF) traverse the membrane as a helical segment. The Extracellular portion of the chain corresponds to 1290–1311 (GKIALVDGTQINRNNNFQTFPQ). Residues 1312–1330 (AVLLLFRCATGEAWQEILL) constitute an intramembrane region (pore-forming). Residues 1321 to 1324 (TGEA) carry the Selectivity filter of repeat IV motif. The Extracellular segment spans residues 1331 to 1356 (ACSYGKLCDPESDYAPGEEYTCGTNF). The segment at 1337 to 1403 (LCDPESDYAP…LGPHHLDEFK (67 aa)) is dihydropyridine binding. Cys-1338 and Cys-1352 form a disulfide bridge. The interval 1349 to 1391 (EYTCGTNFAYYYFISFYMLCAFLIINLFVAVIMDNFDYLTRDW) is phenylalkylamine binding. A helical membrane pass occupies residues 1357–1381 (AYYYFISFYMLCAFLIINLFVAVIM). At 1382–1873 (DNFDYLTRDW…SQETLIPPRP (492 aa)) the chain is on the cytoplasmic side. Residues 1522–1542 (KFYATFLIQEHFRKFMKRQEE) are interaction with calmodulin. Ser-1575 is subject to Phosphoserine; by PKA and CAMK2. Thr-1579 bears the Phosphothreonine; by CK2 mark. At Ser-1617 the chain carries Phosphoserine; by PKA. 2 disordered regions span residues 1689–1782 (EFPG…RPAP) and 1841–1873 (GMAS…PPRP). Residues 1847 to 1858 (GSLSRRSSLGSL) show a composition bias toward low complexity.

It belongs to the calcium channel alpha-1 subunit (TC 1.A.1.11) family. CACNA1S subfamily. As to quaternary structure, component of a calcium channel complex consisting of a pore-forming alpha subunit (CACNA1S) and the ancillary subunits CACNB1 or CACNB2, CACNG1 and CACNA2D1. The channel complex contains alpha, beta, gamma and delta subunits in a 1:1:1:1 ratio, i.e. it contains either CACNB1 or CACNB2. CACNA1S channel activity is modulated by the auxiliary subunits (CACNB1 or CACNB2, CACNG1 and CACNA2D1). Interacts with DYSF and JSRP1. Interacts with RYR1. Interacts with STAC, STAC2 and STAC3 (via their SH3 domains). Interaction with STAC3 promotes expression at the cell membrane. Interaction with STAC2 promotes expression at the cell membrane, but with much lower efficiency than STAC3. Interaction with STAC1 leads to very low levels expression at the cell membrane, much less than the levels observed upon interaction with STAC3 and STAC2. Interacts with CALM. In terms of processing, the alpha-1S subunit is found in two isoforms in the skeletal muscle: a minor form of 212 kDa containing the complete amino acid sequence, and a major form of 190 kDa derived from the full-length form by post-translational proteolysis close to Phe-1690. Phosphorylated. Phosphorylation by PKA activates the calcium channel. Both the minor and major forms are phosphorylated in vitro by PKA. Phosphorylation at Ser-1575 is involved in beta-adrenergic-mediated regulation of the channel. In terms of tissue distribution, detected in skeletal muscle T-tubules (at protein level).

Its subcellular location is the cell membrane. The protein localises to the sarcolemma. It is found in the T-tubule. It catalyses the reaction Ca(2+)(in) = Ca(2+)(out). Channel activity is blocked by dihydropyridines (DHP), phenylalkylamines, and by benzothiazepines. In terms of biological role, pore-forming, alpha-1S subunit of the voltage-gated calcium channel that gives rise to L-type calcium currents in skeletal muscle. Calcium channels containing the alpha-1S subunit play an important role in excitation-contraction coupling in skeletal muscle via their interaction with RYR1, which triggers Ca(2+) release from the sarcplasmic reticulum and ultimately results in muscle contraction. Long-lasting (L-type) calcium channels belong to the 'high-voltage activated' (HVA) group. In Oryctolagus cuniculus (Rabbit), this protein is Voltage-dependent L-type calcium channel subunit alpha-1S (CACNA1S).